The following is a 658-amino-acid chain: Threonine--tRNA ligase (658 aa).

The 64-residue stretch at 1 to 64 (MLNSVSLTFP…GKSGKVEIIT (64 aa)) folds into the TGS domain. Residues 246–549 (DHRKLGREMD…LIENYSGHFP (304 aa)) are catalytic. Zn(2+) contacts are provided by Cys-343, His-394, and His-526.

The protein belongs to the class-II aminoacyl-tRNA synthetase family. In terms of assembly, homodimer. Requires Zn(2+) as cofactor.

The protein localises to the cytoplasm. The enzyme catalyses tRNA(Thr) + L-threonine + ATP = L-threonyl-tRNA(Thr) + AMP + diphosphate + H(+). Its function is as follows. Catalyzes the attachment of threonine to tRNA(Thr) in a two-step reaction: L-threonine is first activated by ATP to form Thr-AMP and then transferred to the acceptor end of tRNA(Thr). Also edits incorrectly charged L-seryl-tRNA(Thr). The sequence is that of Threonine--tRNA ligase from Mesorhizobium japonicum (strain LMG 29417 / CECT 9101 / MAFF 303099) (Mesorhizobium loti (strain MAFF 303099)).